We begin with the raw amino-acid sequence, 447 residues long: UDP-N-acetylmuramoylalanine--D-glutamate ligase (447 aa).

Position 112 to 118 (112 to 118 (GTNGKST)) interacts with ATP.

This sequence belongs to the MurCDEF family.

It localises to the cytoplasm. The catalysed reaction is UDP-N-acetyl-alpha-D-muramoyl-L-alanine + D-glutamate + ATP = UDP-N-acetyl-alpha-D-muramoyl-L-alanyl-D-glutamate + ADP + phosphate + H(+). The protein operates within cell wall biogenesis; peptidoglycan biosynthesis. In terms of biological role, cell wall formation. Catalyzes the addition of glutamate to the nucleotide precursor UDP-N-acetylmuramoyl-L-alanine (UMA). The chain is UDP-N-acetylmuramoylalanine--D-glutamate ligase from Legionella pneumophila (strain Lens).